The sequence spans 827 residues: Multiphosphoryl transfer protein (827 aa).

The 141-residue stretch at 2–142 (IPLTSELVAI…AVIVARLTGA (141 aa)) folds into the PTS EIIA type-2 domain. Residue histidine 62 is the Tele-phosphohistidine intermediate; for EIIA activity of the active site. Histidine 62 is modified (phosphohistidine; by HPr). The 89-residue stretch at 157 to 245 (AQGIDVVVTG…AFEAGLEDEE (89 aa)) folds into the HPr domain. Histidine 171 functions as the Pros-phosphohistidine intermediate; for HPr activity in the catalytic mechanism. Histidine 171 bears the Phosphohistidine; by EI mark. Residues 270 to 827 (EGRTLVGISS…TTAAEVRGLK (558 aa)) are PTS EI. The active-site Tele-phosphohistidine intermediate; for PTS EI activity is histidine 457. A Phosphohistidine; by autocatalysis modification is found at histidine 457. Phosphoenolpyruvate-binding residues include arginine 564 and arginine 600. Residues glutamate 693 and aspartate 717 each coordinate Mg(2+). Phosphoenolpyruvate is bound by residues 716 to 717 (ND) and arginine 727. The active-site Proton donor is the cysteine 764.

It belongs to the PEP-utilizing enzyme family. Mg(2+) is required as a cofactor.

The protein localises to the cytoplasm. It catalyses the reaction L-histidyl-[protein] + phosphoenolpyruvate = N(pros)-phospho-L-histidyl-[protein] + pyruvate. The phosphoenolpyruvate-dependent sugar phosphotransferase system (sugar PTS), a major carbohydrate active transport system, catalyzes the phosphorylation of incoming sugar substrates concomitantly with their translocation across the cell membrane. The enzyme II FruAB PTS system is involved in fructose transport. In Rhodobacter capsulatus (Rhodopseudomonas capsulata), this protein is Multiphosphoryl transfer protein.